A 726-amino-acid chain; its full sequence is A-type inclusion protein A25 homolog (726 aa).

The tract at residues T342–I361 is disordered. Over residues E347 to P360 the composition is skewed to basic and acidic residues. Tandem repeats lie at residues R612–N634, Q639–S661, T667–N689, and T691–N713. Residues R612–N713 form a 4 X approximate tandem repeats region.

This sequence belongs to the poxviridae A25 protein family. As to quaternary structure, interacts (via N-terminus) with protein A26.

It is found in the virion. In terms of biological role, structural protein that forms a matrix surrounding the mature virion (MV) through interaction with protein A26. Presence of protein A25 in the virion structurally prevents direct virus-cell fusion mechanism. This Camelus protein is A-type inclusion protein A25 homolog.